A 208-amino-acid chain; its full sequence is Large ribosomal subunit protein uL4 (208 aa).

A disordered region spans residues 42-77 (SMRQGTHKTKTKTEVSGGGRKPWRQKGTGRARQGSI).

This sequence belongs to the universal ribosomal protein uL4 family. As to quaternary structure, part of the 50S ribosomal subunit.

One of the primary rRNA binding proteins, this protein initially binds near the 5'-end of the 23S rRNA. It is important during the early stages of 50S assembly. It makes multiple contacts with different domains of the 23S rRNA in the assembled 50S subunit and ribosome. Its function is as follows. Forms part of the polypeptide exit tunnel. The polypeptide is Large ribosomal subunit protein uL4 (Spiroplasma kunkelii).